A 178-amino-acid chain; its full sequence is Large ribosomal subunit protein bL17 (178 aa).

The segment covering 126–139 (DRARRVAASKKAEE) has biased composition (basic and acidic residues). The segment at 126-178 (DRARRVAASKKAEEQAPAAEAEEQAPAAEAEAPAADAAAEAKADEAAEDKKDA) is disordered. Positions 140-163 (QAPAAEAEEQAPAAEAEAPAADAA) are enriched in low complexity. Residues 164–178 (AEAKADEAAEDKKDA) are compositionally biased toward basic and acidic residues.

It belongs to the bacterial ribosomal protein bL17 family. As to quaternary structure, part of the 50S ribosomal subunit. Contacts protein L32.

The protein is Large ribosomal subunit protein bL17 of Nocardia farcinica (strain IFM 10152).